The chain runs to 497 residues: Cytochrome P450 2D6 (497 aa).

Aspartate 301 provides a ligand contact to substrate. Cysteine 443 contacts heme.

The protein belongs to the cytochrome P450 family. The cofactor is heme.

It is found in the endoplasmic reticulum membrane. The protein resides in the microsome membrane. The enzyme catalyses (5Z,8Z,11Z,14Z)-eicosatetraenoate + reduced [NADPH--hemoprotein reductase] + O2 = (8R,9S)-epoxy-(5Z,11Z,14Z)-eicosatrienoate + oxidized [NADPH--hemoprotein reductase] + H2O + H(+). The catalysed reaction is (5Z,8Z,11Z,14Z)-eicosatetraenoate + reduced [NADPH--hemoprotein reductase] + O2 = (11R,12S)-epoxy-(5Z,8Z,14Z)-eicosatrienoate + oxidized [NADPH--hemoprotein reductase] + H2O + H(+). It carries out the reaction (5Z,8Z,11Z,14Z)-eicosatetraenoate + reduced [NADPH--hemoprotein reductase] + O2 = (14S,15R)-epoxy-(5Z,8Z,11Z)-eicosatrienoate + oxidized [NADPH--hemoprotein reductase] + H2O + H(+). It catalyses the reaction N-(5Z,8Z,11Z,14Z-eicosatetraenoyl)-ethanolamine + reduced [NADPH--hemoprotein reductase] + O2 = N-(8,9-epoxy-5Z,11Z,14Z-eicosatrienoyl)-ethanolamine + oxidized [NADPH--hemoprotein reductase] + H2O + H(+). The enzyme catalyses N-(5Z,8Z,11Z,14Z-eicosatetraenoyl)-ethanolamine + reduced [NADPH--hemoprotein reductase] + O2 = N-(11,12-epoxy-5Z,8Z,14Z-eicosatrienoyl)-ethanolamine + oxidized [NADPH--hemoprotein reductase] + H2O + H(+). The catalysed reaction is N-(5Z,8Z,11Z,14Z-eicosatetraenoyl)-ethanolamine + reduced [NADPH--hemoprotein reductase] + O2 = N-(14,15-epoxy-5Z,8Z,11Z-eicosatrienoyl)-ethanolamine + oxidized [NADPH--hemoprotein reductase] + H2O + H(+). It carries out the reaction N-(5Z,8Z,11Z,14Z-eicosatetraenoyl)-ethanolamine + reduced [NADPH--hemoprotein reductase] + O2 = N-(20-hydroxy-5Z,8Z,11Z,14Z-eicosatetraenoyl)-ethanolamine + oxidized [NADPH--hemoprotein reductase] + H2O + H(+). It catalyses the reaction (5Z,8Z,11Z,14Z,17Z)-eicosapentaenoate + reduced [NADPH--hemoprotein reductase] + O2 = (17S,18R)-epoxy-(5Z,8Z,11Z,14Z)-eicosatetraenoate + oxidized [NADPH--hemoprotein reductase] + H2O + H(+). The enzyme catalyses (4Z,7Z,10Z,13Z,16Z,19Z)-docosahexaenoate + reduced [NADPH--hemoprotein reductase] + O2 = (19R,20S)-epoxy-(4Z,7Z,10Z,13Z,16Z)-docosapentaenoate + oxidized [NADPH--hemoprotein reductase] + H2O + H(+). The catalysed reaction is (4Z,7Z,10Z,13Z,16Z,19Z)-docosahexaenoate + reduced [NADPH--hemoprotein reductase] + O2 = (19S,20R)-epoxy-(4Z,7Z,10Z,13Z,16Z)-docosapentaenoate + oxidized [NADPH--hemoprotein reductase] + H2O + H(+). It carries out the reaction cholesterol + reduced [NADPH--hemoprotein reductase] + O2 = 25-hydroxycholesterol + oxidized [NADPH--hemoprotein reductase] + H2O + H(+). It catalyses the reaction all-trans-retinol + reduced [NADPH--hemoprotein reductase] + O2 = all-trans-retinal + oxidized [NADPH--hemoprotein reductase] + 2 H2O + H(+). It participates in cofactor metabolism; retinol metabolism. Its pathway is lipid metabolism; fatty acid metabolism. The protein operates within steroid metabolism; cholesterol metabolism. In terms of biological role, a cytochrome P450 monooxygenase involved in the metabolism of fatty acids, steroids and retinoids. Mechanistically, uses molecular oxygen inserting one oxygen atom into a substrate, and reducing the second into a water molecule, with two electrons provided by NADPH via cytochrome P450 reductase (NADPH--hemoprotein reductase). Catalyzes the epoxidation of double bonds of polyunsaturated fatty acids (PUFA). Metabolizes endocannabinoid arachidonoylethanolamide (anandamide) to 20-hydroxyeicosatetraenoic acid ethanolamide (20-HETE-EA) and 8,9-, 11,12-, and 14,15-epoxyeicosatrienoic acid ethanolamides (EpETrE-EAs), potentially modulating endocannabinoid system signaling. Catalyzes the hydroxylation of carbon-hydrogen bonds. Metabolizes cholesterol toward 25-hydroxycholesterol, a physiological regulator of cellular cholesterol homeostasis. Catalyzes the oxidative transformations of all-trans retinol to all-trans retinal, a precursor for the active form all-trans-retinoic acid. Also involved in the oxidative metabolism of drugs such as antiarrhythmics, adrenoceptor antagonists, and tricyclic antidepressants. This is Cytochrome P450 2D6 (CYP2D6) from Pan troglodytes (Chimpanzee).